Reading from the N-terminus, the 134-residue chain is MWSDPIADMLTRIRNANVVFKEYVDVPASNIKKAICEILKKEGFIHDYKYIEDGKQGILRIHMKYKGQRRDRERVIKGIVRVSKPGRRLYVSKDEIPKVKNGIGVAILTTSKGVVTDKEARVLGVGGEVIAYIW.

This sequence belongs to the universal ribosomal protein uS8 family. Part of the 30S ribosomal subunit. Contacts proteins S5 and S12.

One of the primary rRNA binding proteins, it binds directly to 16S rRNA central domain where it helps coordinate assembly of the platform of the 30S subunit. The chain is Small ribosomal subunit protein uS8 from Pseudothermotoga lettingae (strain ATCC BAA-301 / DSM 14385 / NBRC 107922 / TMO) (Thermotoga lettingae).